Reading from the N-terminus, the 327-residue chain is Cytochrome f (327 aa).

The N-terminal stretch at 1 to 24 (MKRIGLVFCALLLLLGMGARPAAA) is a signal peptide. Heme is bound by residues Tyr25, Cys45, Cys48, and His49. The helical transmembrane segment at 293 to 313 (VKWLVAFLAAITITQVLLVLK) threads the bilayer.

Belongs to the cytochrome f family. In terms of assembly, the 4 large subunits of the cytochrome b6-f complex are cytochrome b6, subunit IV (17 kDa polypeptide, PetD), cytochrome f and the Rieske protein, while the 4 small subunits are PetG, PetL, PetM and PetN. The complex functions as a dimer. The cofactor is heme.

It is found in the cellular thylakoid membrane. Its function is as follows. Component of the cytochrome b6-f complex, which mediates electron transfer between photosystem II (PSII) and photosystem I (PSI), cyclic electron flow around PSI, and state transitions. This chain is Cytochrome f, found in Synechococcus sp. (strain JA-2-3B'a(2-13)) (Cyanobacteria bacterium Yellowstone B-Prime).